Here is a 331-residue protein sequence, read N- to C-terminus: MKKTAVLSTVAFAIALGSASASFAADNRIGVTIYKYDDNFMSLMRKEIDKEAKVVGGIKLLMNDSQNAQSIQNDQVDILLSKGVKALAINLVDPAAAPTIIGKAKSDNIPVVFFNKDPGAKAIGSYEQAYYVGTDPKESGLIQGDLIAKQWKANPALDLNKDGKIQFVLLKGEPGHPDAEVRTKYVIEELNAKGIQTEQLFIDTGMWDAAMAKDKVDAWLSSSKANDIEVIISNNDGMALGALEATKAHGKKLPIFGVDALPEALQLISKGELAGTVLNDSVNQGKAVVQLSNNLAQGKSATEGTKWELKDRVVRIPYVGVDKDNLGDFLK.

An N-terminal signal peptide occupies residues 1-24 (MKKTAVLSTVAFAIALGSASASFA). Positions 38 and 115 each coordinate beta-D-galactose. Positions 38 and 115 each coordinate beta-D-glucose. Ca(2+)-binding residues include D158, N160, D162, K164, and Q166. H176, D178, and R182 together coordinate beta-D-galactose. 3 residues coordinate beta-D-glucose: H176, D178, and R182. Residue E229 participates in Ca(2+) binding. The beta-D-galactose site is built by N235, D259, and N279. Beta-D-glucose contacts are provided by N235, D259, and N279.

It belongs to the bacterial solute-binding protein 2 family. As to quaternary structure, the ABC transporter complex is composed of one ATP-binding protein (MglA), two transmembrane proteins (MglC) and a solute-binding protein (MglB).

It is found in the periplasm. Part of the ABC transporter complex MglABC involved in galactose/methyl galactoside import. The sequence is that of D-galactose/methyl-galactoside binding periplasmic protein MglB (mglB) from Haemophilus influenzae (strain ATCC 51907 / DSM 11121 / KW20 / Rd).